A 124-amino-acid chain; its full sequence is Ribonuclease pancreatic (124 aa).

The segment covering 1–13 (KETAAAKFERQHM) has biased composition (basic and acidic residues). The segment at 1 to 24 (KETAAAKFERQHMDSSTSSASSSN) is disordered. Substrate contacts are provided by Lys-7 and Arg-10. His-12 acts as the Proton acceptor in catalysis. 4 cysteine pairs are disulfide-bonded: Cys-26–Cys-84, Cys-40–Cys-95, Cys-58–Cys-110, and Cys-65–Cys-72. Residues 41-45 (KPVBT), Lys-66, and Arg-85 contribute to the substrate site. His-119 serves as the catalytic Proton donor.

This sequence belongs to the pancreatic ribonuclease family. As to quaternary structure, monomer. Interacts with and forms tight 1:1 complexes with RNH1. Dimerization of two such complexes may occur. Interaction with RNH1 inhibits this protein. In terms of tissue distribution, pancreas.

It is found in the secreted. It carries out the reaction an [RNA] containing cytidine + H2O = an [RNA]-3'-cytidine-3'-phosphate + a 5'-hydroxy-ribonucleotide-3'-[RNA].. The enzyme catalyses an [RNA] containing uridine + H2O = an [RNA]-3'-uridine-3'-phosphate + a 5'-hydroxy-ribonucleotide-3'-[RNA].. Its function is as follows. Endonuclease that catalyzes the cleavage of RNA on the 3' side of pyrimidine nucleotides. Acts on single-stranded and double-stranded RNA. The protein is Ribonuclease pancreatic (RNASE1) of Boselaphus tragocamelus (Nilgai).